Reading from the N-terminus, the 290-residue chain is 4-diphosphocytidyl-2-C-methyl-D-erythritol kinase (290 aa).

Residue lysine 13 is part of the active site. 93-103 contacts ATP; sequence PVQAGLGGGSA. Aspartate 135 is a catalytic residue.

Belongs to the GHMP kinase family. IspE subfamily.

It carries out the reaction 4-CDP-2-C-methyl-D-erythritol + ATP = 4-CDP-2-C-methyl-D-erythritol 2-phosphate + ADP + H(+). It participates in isoprenoid biosynthesis; isopentenyl diphosphate biosynthesis via DXP pathway; isopentenyl diphosphate from 1-deoxy-D-xylulose 5-phosphate: step 3/6. In terms of biological role, catalyzes the phosphorylation of the position 2 hydroxy group of 4-diphosphocytidyl-2C-methyl-D-erythritol. This Desulfitobacterium hafniense (strain Y51) protein is 4-diphosphocytidyl-2-C-methyl-D-erythritol kinase.